A 223-amino-acid polypeptide reads, in one-letter code: Neurotrophic factor BDNF precursor form (223 aa).

The N-terminal stretch at 1–5 is a signal peptide; that stretch reads SCMKA. Positions 6–114 are excised as a propeptide; sequence APMKEVSIRG…AANMSMRVRR (109 aa). An N-linked (GlcNAc...) asparagine glycan is attached at Asn-107. Intrachain disulfides connect Cys-127–Cys-194 and Cys-172–Cys-223.

Belongs to the NGF-beta family.

Its subcellular location is the secreted. Its function is as follows. Promotes the survival of neuronal populations that are all located either in the central nervous system or directly connected to it. This Calabaria reinhardtii (Calabar boa) protein is Neurotrophic factor BDNF precursor form (BDNF).